The sequence spans 581 residues: Rhodanese-like domain-containing protein 6 (581 aa).

Residues 158-258 (ENKELVLLDA…YLEQFPSGGF (101 aa)) enclose the Rhodanese domain. The Cysteine persulfide intermediate role is filled by Cys-216.

The polypeptide is Rhodanese-like domain-containing protein 6 (STR6) (Arabidopsis thaliana (Mouse-ear cress)).